We begin with the raw amino-acid sequence, 428 residues long: Mitochondrial distribution and morphology protein 12 (428 aa).

Residues 1–387 (MSFDINWNQL…WPSWICIDMN (387 aa)) enclose the SMP-LTD domain. 2 disordered regions span residues 75–168 (VMNE…APPL) and 387–428 (NDDD…EAGE). The span at 81–96 (NDSKDEHLKNHGDGIN) shows a compositional bias: basic and acidic residues. The span at 106 to 133 (LDDEDEDDEDDDEDDEDEEEEDEDDYDD) shows a compositional bias: acidic residues. A compositionally biased stretch (polar residues) spans 146 to 161 (LNFNENSTTPSANSFA). A compositionally biased stretch (acidic residues) spans 387-403 (NDDDDEEEEEEESEDND). Residues 412 to 428 (NDGKHGDGRTDETEAGE) show a composition bias toward basic and acidic residues.

It belongs to the MDM12 family. In terms of assembly, component of the ER-mitochondria encounter structure (ERMES) or MDM complex, composed of MMM1, MDM10, MDM12 and MDM34. An MMM1 homodimer associates with one molecule of MDM12 on each side in a pairwise head-to-tail manner, and the SMP-LTD domains of MMM1 and MDM12 generate a continuous hydrophobic tunnel for phospholipid trafficking.

It is found in the mitochondrion outer membrane. The protein resides in the endoplasmic reticulum membrane. Component of the ERMES/MDM complex, which serves as a molecular tether to connect the endoplasmic reticulum (ER) and mitochondria. Components of this complex are involved in the control of mitochondrial shape and protein biogenesis, and function in nonvesicular lipid trafficking between the ER and mitochondria. MDM12 is required for the interaction of the ER-resident membrane protein MMM1 and the outer mitochondrial membrane-resident beta-barrel protein MDM10. The MDM12-MMM1 subcomplex functions in the major beta-barrel assembly pathway that is responsible for biogenesis of all mitochondrial outer membrane beta-barrel proteins, and acts in a late step after the SAM complex. The MDM10-MDM12-MMM1 subcomplex further acts in the TOM40-specific pathway after the action of the MDM12-MMM1 complex. Essential for establishing and maintaining the structure of mitochondria and maintenance of mtDNA nucleoids. In Candida albicans (strain SC5314 / ATCC MYA-2876) (Yeast), this protein is Mitochondrial distribution and morphology protein 12.